Consider the following 170-residue polypeptide: UPF0220 protein C8D2.02c (170 aa).

The next 4 membrane-spanning stretches (helical) occupy residues 23 to 43, 54 to 74, 101 to 121, and 136 to 156; these read LGVYFAGIMFASAVWVFVDAA, LHITFIDWIPFLCSILGIVIV, ILFIGFALLAGGLGGSFTVFI, and MGSANIISNILFMISATALWI.

This sequence belongs to the UPF0220 family.

Its subcellular location is the membrane. The protein is UPF0220 protein C8D2.02c of Schizosaccharomyces pombe (strain 972 / ATCC 24843) (Fission yeast).